The following is a 272-amino-acid chain: DNA repair protein RecO (272 aa).

This sequence belongs to the RecO family.

Functionally, involved in DNA repair and RecF pathway recombination. This Limosilactobacillus fermentum (strain NBRC 3956 / LMG 18251) (Lactobacillus fermentum) protein is DNA repair protein RecO.